The chain runs to 237 residues: N-(5'-phosphoribosyl)anthranilate isomerase (237 aa).

This sequence belongs to the TrpF family.

The enzyme catalyses N-(5-phospho-beta-D-ribosyl)anthranilate = 1-(2-carboxyphenylamino)-1-deoxy-D-ribulose 5-phosphate. Its pathway is amino-acid biosynthesis; L-tryptophan biosynthesis; L-tryptophan from chorismate: step 3/5. The sequence is that of N-(5'-phosphoribosyl)anthranilate isomerase from Desulfitobacterium hafniense (strain Y51).